The chain runs to 251 residues: DNA repair protein RecO (251 aa).

The protein belongs to the RecO family.

Its function is as follows. Involved in DNA repair and RecF pathway recombination. The chain is DNA repair protein RecO from Albidiferax ferrireducens (strain ATCC BAA-621 / DSM 15236 / T118) (Rhodoferax ferrireducens).